Here is a 105-residue protein sequence, read N- to C-terminus: Large ribosomal subunit protein uL24 (105 aa).

This sequence belongs to the universal ribosomal protein uL24 family. Part of the 50S ribosomal subunit.

Its function is as follows. One of two assembly initiator proteins, it binds directly to the 5'-end of the 23S rRNA, where it nucleates assembly of the 50S subunit. Functionally, one of the proteins that surrounds the polypeptide exit tunnel on the outside of the subunit. The sequence is that of Large ribosomal subunit protein uL24 from Wolbachia pipientis wMel.